Consider the following 799-residue polypeptide: Potassium transporter 21 (799 aa).

Residues 1–56 (MDPGVEKKKQQMELVDVESGGLPVERQDSLFREAVRAEHAGAAHWDEQDSWGRTMS) are Cytoplasmic-facing. Residues 57-77 (LAFQCVGILYGDIGTSSLYVY) form a helical membrane-spanning segment. Residues 78–93 (SSTFEHGIGHPDDVVG) are Extracellular-facing. A helical transmembrane segment spans residues 94–114 (VLSLIVYSFMLFTVIKIVFVA). Over 115-181 (LHANDHGDGG…QLLEASKAAK (67 aa)) the chain is Cytoplasmic. The helical transmembrane segment at 182-202 (ISLFLLTILAIAMVISDAVLT) threads the bilayer. Topologically, residues 203–219 (PPISVLSAVGGLREKVP) are extracellular. Residues 220-240 (HLTTDQIVWITVAILVVLFAI) form a helical membrane-spanning segment. At 241 to 251 (QRYGTDKVGYS) the chain is on the cytoplasmic side. A helical membrane pass occupies residues 252 to 272 (FAPIILLWLLLIGATGLYNLI). The Extracellular portion of the chain corresponds to 273 to 301 (KHDISVLRAFNPKYIIDYFRRNKKEGWVS). A helical membrane pass occupies residues 302–322 (LGSILLCFTGSEALFANLGYF). Topologically, residues 323–328 (SIRSIQ) are cytoplasmic. A helical membrane pass occupies residues 329–349 (LSFSFALLPSVLLTYIGQAAF). Residues 350–362 (LSKNPKNVANTFF) lie on the Extracellular side of the membrane. The helical transmembrane segment at 363 to 383 (AATPISLFWPTFIMAIAASII) threads the bilayer. The Cytoplasmic segment spans residues 384 to 420 (GSQAMISCAFATVSHLQSLSCFPRVKILHTSKRFPGQ). A helical membrane pass occupies residues 421–441 (LYIPGVNFLLCVAACVVTVSF). Over 442 to 452 (KTTVIIGKAHE) the chain is Extracellular. A helical transmembrane segment spans residues 453–473 (ICVILVMIITTLLMTIVMLLV). Over 474-475 (WK) the chain is Cytoplasmic. Residues 476–496 (INILWVALFFITFTSTEAVYL) form a helical membrane-spanning segment. Residues 497-508 (SSVLYKFTHGPY) lie on the Extracellular side of the membrane. Residues 509–529 (VPVAMSVVLMVVMIVWHYVHV) form a helical membrane-spanning segment. At 530 to 799 (KRYKYELEHT…LLKVGISYEI (270 aa)) the chain is on the cytoplasmic side.

Belongs to the HAK/KUP transporter (TC 2.A.72.3) family.

The protein resides in the membrane. High-affinity potassium transporter. In Oryza sativa subsp. japonica (Rice), this protein is Potassium transporter 21 (HAK21).